A 429-amino-acid chain; its full sequence is Acetyltransferase pyr8 (429 aa).

Transmembrane regions (helical) follow at residues 12–32 (IAQELALYLAFTVPTAFVIIT), 39–56 (LRLAWTPCLLYILYRFSL), 69–89 (GVAAGQATVAALQCLNLLLIT), 154–174 (YVLRESAIIIWQYLLLDLIHM), 221–241 (VCLNIVSRIYCLVLVVLRISA), 300–320 (IFFTFFTSAVLHLACDAILGI), 324–344 (GSGAMPFFCVVPLAIMFEDGV), 365–385 (LVGFLWVGSWMYATSPWYLYP), and 409–429 (VAQKVLLVYGVVLYWAIGGEI).

The protein belongs to the wax synthase family.

It localises to the membrane. It functions in the pathway secondary metabolite biosynthesis; terpenoid biosynthesis. Its function is as follows. Acetyltransferase; part of the gene cluster that mediates the biosynthesis of pyripyropene A, a specific human acyl-coenzyme A:cholesterol acyltransferase 2 inhibitor. The first step of the pathway is the synthesis of nicotinyl-CoA from nicotinic acid by the nicotinic acid-CoA ligase pyr1. Nicotinyl-CoA is then a substrate of polyketide synthase pyr2 to produce 4-hydroxy-6-(3-pyridinyl)-2H-pyran-2-one (HPPO) which is further prenylated by the polyprenyl transferase pyr6 to yield farnesyl-HPPO. The next steps consist of an epoxidation of farnesyl-HPPO to epoxyfarnesyl-HPPO by FAD-dependent monooxygenase pyr5 and a cyclization of the terpenoid portion by the terpene cyclase pyr4 to yield deacetyl-pyripyropene E. The 2 cytochrome P450 monooxygenases pyr3 and pyr9, and the 2 acetyltransferases pyr7 and pyr8 are involved in the conversion of deacetyl-pyripyropene E into pyripyropene A through several cycles of oxidation and acetylation steps. Pyr7 acetylates deacetyl-pyripyropene E to pyripyropene E which is oxidized to 11-deacetyl-pyripyropene O by pyr3, which is in turn acetylated into pyripyropene O by pyr8. Pyripyropene O is then oxidized to deacetyl-pyripyropene A by pyr9. Deacetyl-pyripyropene A is finally acetylated to pyripyropene A by pyr8. The polypeptide is Acetyltransferase pyr8 (Aspergillus fumigatus (strain ATCC MYA-4609 / CBS 101355 / FGSC A1100 / Af293) (Neosartorya fumigata)).